The following is a 619-amino-acid chain: 1-deoxy-D-xylulose-5-phosphate synthase (619 aa).

Thiamine diphosphate is bound by residues His-74 and 115-117 (GHS). Asp-146 is a binding site for Mg(2+). Thiamine diphosphate is bound by residues 147–148 (GA), Asn-175, Tyr-285, and Glu-365. Asn-175 serves as a coordination point for Mg(2+).

This sequence belongs to the transketolase family. DXPS subfamily. In terms of assembly, homodimer. It depends on Mg(2+) as a cofactor. Requires thiamine diphosphate as cofactor.

It catalyses the reaction D-glyceraldehyde 3-phosphate + pyruvate + H(+) = 1-deoxy-D-xylulose 5-phosphate + CO2. The protein operates within metabolic intermediate biosynthesis; 1-deoxy-D-xylulose 5-phosphate biosynthesis; 1-deoxy-D-xylulose 5-phosphate from D-glyceraldehyde 3-phosphate and pyruvate: step 1/1. Its function is as follows. Catalyzes the acyloin condensation reaction between C atoms 2 and 3 of pyruvate and glyceraldehyde 3-phosphate to yield 1-deoxy-D-xylulose-5-phosphate (DXP). The protein is 1-deoxy-D-xylulose-5-phosphate synthase of Clostridium acetobutylicum (strain ATCC 824 / DSM 792 / JCM 1419 / IAM 19013 / LMG 5710 / NBRC 13948 / NRRL B-527 / VKM B-1787 / 2291 / W).